We begin with the raw amino-acid sequence, 1592 residues long: ABC transporter ATP-binding protein/permease VMR1 (1592 aa).

Residues 1-33 lie on the Vacuolar side of the membrane; sequence MGTDPLIIRNNGSFWEVDDFTRLGRTQLLSYYL. N-linked (GlcNAc...) asparagine glycosylation is present at Asn11. The chain crosses the membrane as a helical span at residues 34-54; sequence PLAIIASIGIFALCRSGLSRY. The Cytoplasmic segment spans residues 55 to 74; that stretch reads VRSAECDLVNEYLFGAQEER. The chain crosses the membrane as a helical span at residues 75–95; sequence KEDNSIERLLRNSNTQANYVN. Residues 96–100 lie on the Vacuolar side of the membrane; that stretch reads VKKQG. Residues 101 to 121 traverse the membrane as a helical segment; sequence RILKLRHFDITTIDVKQIDAK. The Cytoplasmic segment spans residues 122–131; the sequence is NHGGLTFSRP. The helical transmembrane segment at 132–152 threads the bilayer; it reads STSDHLRKSSEIVLMSLQIIG. The Vacuolar segment spans residues 153 to 170; the sequence is LSFLRVTKINIELTNRDV. A helical membrane pass occupies residues 171–191; that stretch reads TTLLLFWLILLSLSILRVYKR. Residues 192 to 329 are Cytoplasmic-facing; sequence STNLWAICFT…NKHINNLTLA (138 aa). The helical transmembrane segment at 330–350 threads the bilayer; that stretch reads LFESFKTYLLIGMLWVLVNSI. In terms of domain architecture, ABC transmembrane type-1 1 spans 338–632; it reads LLIGMLWVLV…LSNMLSFINQ (295 aa). Topologically, residues 351 to 379 are vacuolar; it reads VNLLPTILMKRFLEIVDNPNRSSSCMNLA. Residue Asn370 is glycosylated (N-linked (GlcNAc...) asparagine). The chain crosses the membrane as a helical span at residues 380–400; sequence WLYIIGMFICRLTLAICNSQG. The Cytoplasmic segment spans residues 401–465; it reads QFVSDKICLR…SFKVSELANY (65 aa). Residues 466–486 traverse the membrane as a helical segment; it reads LYVTVQAVIMIIVVVGLLFNF. The Vacuolar portion of the chain corresponds to 487–489; that stretch reads LGV. Residues 490 to 510 traverse the membrane as a helical segment; sequence SAFAGISIILVMFPLNFLLAN. The Cytoplasmic segment spans residues 511–572; the sequence is LLGKFQKQTL…SLLKKSLVWS (62 aa). Residues 573 to 593 traverse the membrane as a helical segment; the sequence is VTSFLWFVTPTLVTGVTFAIC. The Vacuolar segment spans residues 594 to 614; that stretch reads TFVQHEDLNAPLAFTTLSLFT. The chain crosses the membrane as a helical span at residues 615–635; that stretch reads LLKTPLDQLSNMLSFINQSKV. The Cytoplasmic portion of the chain corresponds to 636–989; sequence SLKRISDFLR…ALTALFALYI (354 aa). The region spanning 664 to 908 is the ABC transporter 1 domain; it reads IEFKNATLTW…GLFKEKYVQL (245 aa). An ATP-binding site is contributed by 702 to 709; it reads GSTGSGKS. Residues 981 to 1282 form the ABC transmembrane type-1 2 domain; the sequence is LTALFALYIT…LVRLYSTFEM (302 aa). A helical transmembrane segment spans residues 990–1010; the sequence is TAQILFISQSWWIRHWVNDTN. The Vacuolar portion of the chain corresponds to 1011-1051; that stretch reads VRINAPGFAMDTLPLKGMTDSSKNKHNAFYYLTVYFLIGII. A helical membrane pass occupies residues 1052–1072; the sequence is QAMLGGFKTMMTFLSGMRASR. Residues 1073 to 1115 lie on the Cytoplasmic side of the membrane; the sequence is KIFNNLLDLVLHAQIRFFDVTPVGRIMNRFSKDIEGVDQELIP. The helical transmembrane segment at 1116–1136 threads the bilayer; the sequence is YLEVTIFCLIQCASIIFLITV. Residue Ile1137 is a topological domain, vacuolar. The helical transmembrane segment at 1138 to 1158 threads the bilayer; it reads TPRFLTVAVIVFVLYFFVGKW. Residues 1159–1229 lie on the Cytoplasmic side of the membrane; sequence YLTASRELKR…VTVKWFSFRV (71 aa). The chain crosses the membrane as a helical span at residues 1230–1250; sequence DMIGAFIVLASGSFILLNIAN. Over 1251 to 1252 the chain is Vacuolar; the sequence is ID. A helical transmembrane segment spans residues 1253-1273; the sequence is SGLAGISLTYAILFTDGALWL. Topologically, residues 1274–1592 are cytoplasmic; the sequence is VRLYSTFEMN…IAKQSSKMMK (319 aa). One can recognise an ABC transporter 2 domain in the interval 1323-1572; it reads IEIENLSLRY…ERGIFYSMCR (250 aa). Position 1357 to 1364 (1357 to 1364) interacts with ATP; sequence GRTGAGKS.

This sequence belongs to the ABC transporter superfamily. ABC transporter which may be involved in multidrug resistance.

Its subcellular location is the vacuole membrane. The chain is ABC transporter ATP-binding protein/permease VMR1 (VMR1) from Saccharomyces cerevisiae (strain ATCC 204508 / S288c) (Baker's yeast).